Consider the following 520-residue polypeptide: Ribonuclease Y 2 (520 aa).

Residues 7 to 23 (VVLLLASIGVGYGLRAK) traverse the membrane as a helical segment. Residues 206 to 269 (NHRSFIAENA…AVAMETMEMI (64 aa)) form the KH domain. One can recognise an HD domain in the interval 332–425 (ILEHSIETAK…VEAADAISGA (94 aa)).

The protein belongs to the RNase Y family.

It localises to the cell membrane. Functionally, endoribonuclease that initiates mRNA decay. The protein is Ribonuclease Y 2 of Pediococcus pentosaceus (strain ATCC 25745 / CCUG 21536 / LMG 10740 / 183-1w).